Consider the following 205-residue polypeptide: dITP/XTP pyrophosphatase (205 aa).

A substrate-binding site is contributed by 11-16 (TKNMGK). Mg(2+) contacts are provided by glutamate 44 and aspartate 73. The active-site Proton acceptor is the aspartate 73. Substrate is bound by residues serine 74, 158-161 (FGYD), lysine 181, and 186-187 (HR).

Belongs to the HAM1 NTPase family. As to quaternary structure, homodimer. It depends on Mg(2+) as a cofactor.

The enzyme catalyses XTP + H2O = XMP + diphosphate + H(+). It catalyses the reaction dITP + H2O = dIMP + diphosphate + H(+). The catalysed reaction is ITP + H2O = IMP + diphosphate + H(+). Functionally, pyrophosphatase that catalyzes the hydrolysis of nucleoside triphosphates to their monophosphate derivatives, with a high preference for the non-canonical purine nucleotides XTP (xanthosine triphosphate), dITP (deoxyinosine triphosphate) and ITP. Seems to function as a house-cleaning enzyme that removes non-canonical purine nucleotides from the nucleotide pool, thus preventing their incorporation into DNA/RNA and avoiding chromosomal lesions. The chain is dITP/XTP pyrophosphatase from Bacillus cereus (strain ATCC 14579 / DSM 31 / CCUG 7414 / JCM 2152 / NBRC 15305 / NCIMB 9373 / NCTC 2599 / NRRL B-3711).